A 386-amino-acid chain; its full sequence is Zinc finger protein 385A (386 aa).

The segment at 74-98 adopts a Matrin-type 1 zinc-finger fold; it reads ISCNVCQIRFNSQSQAEAHYKGNRH. Residues 88 to 193 are disordered; the sequence is QAEAHYKGNR…ASLPGGSKEE (106 aa). A compositionally biased stretch (basic and acidic residues) spans 103 to 121; the sequence is KGIEAAKTRGREPSVRESG. Residues 145–351 form a necessary for binding to ITPR1, CEBPA and p53/TP53 mRNAs region; it reads NGLGPAPGSP…AGSPLSLRPA (207 aa). Ser-185 is subject to Phosphoserine. A Matrin-type 2 zinc finger spans residues 201–225; that stretch reads LYCALCKVAVNSLSQLEAHNKGTKH. Position 248 is a phosphothreonine (Thr-248). The segment at 261–285 adopts a Matrin-type 3 zinc-finger fold; it reads FHCEICNVKVNSEVQLKQHISSRRH. Residues 279 to 305 are disordered; that stretch reads HISSRRHRDGVAGKPNPLLSRHKKPRG.

Interacts with p53/TP53; the interaction is direct and enhances p53/TP53 transactivation functions on cell-cycle arrest target genes, resulting in growth arrest. Interacts with ELAVL1; the interaction is indirect, mRNA-dependent and may regulate p53/TP53 expression. In terms of processing, ubiquitinated upon prolonged exposure to genotoxic stress, which leads to proteasomal degradation of ZNF385A and releases p53/TP53 from cell-cycle arrest target gene promoters. Expressed in brain and testis (at protein level). In brain, the expression is located to olfactory bulb, cerebral cortex, hippocampus, satellite cells and Purkinje cells of the cerebellum molecular layer. Detected in bone marrow, white and brown adipose tissue, lung and at lower levels in the thymus.

The protein localises to the cytoplasm. It is found in the nucleus. The protein resides in the nucleolus. Its subcellular location is the cell projection. It localises to the dendrite. In terms of biological role, RNA-binding protein that affects the localization and the translation of a subset of mRNA. May play a role in adipogenesis through binding to the 3'-UTR of CEBPA mRNA and regulation of its translation. Targets ITPR1 mRNA to dendrites in Purkinje cells, and may regulate its activity-dependent translation. With ELAVL1, binds the 3'-UTR of p53/TP53 mRNAs to control their nuclear export induced by CDKN2A. Hence, may regulate p53/TP53 expression and mediate in part the CDKN2A anti-proliferative activity. May also bind CCNB1 mRNA. Alternatively, may also regulate p53/TP53 activity through direct protein-protein interaction. Interacts with p53/TP53 and promotes cell-cycle arrest over apoptosis enhancing preferentially the DNA binding and transactivation of p53/TP53 on cell-cycle arrest target genes over proapoptotic target genes. May also regulate the ubiquitination and stability of CDKN1A promoting DNA damage-induced cell cycle arrest. Also plays a role in megakaryocytes differentiation. This is Zinc finger protein 385A (Znf385a) from Mus musculus (Mouse).